A 555-amino-acid polypeptide reads, in one-letter code: Potassium-transporting ATPase potassium-binding subunit (555 aa).

10 consecutive transmembrane segments (helical) span residues 2–22, 60–80, 130–150, 173–193, 246–266, 278–298, 374–394, 412–432, 483–503, and 525–545; these read IWVAVVITMLLFILVAKPTGI, QYALSLVLLNGFMIVVVYFIF, IGITFLMFAAPATTLALVMAF, VFLPIAFMAALVFVAFGVPQT, MSNILQMMLMMLLPTALPFTY, ILFVSLFMVFLLGFITITTSE, AGFVNIIMYAIIAVFISGLMV, LIAVTILFHPLLILGFSALAL, LVMFLGRYFSLITMLAVAASL, and GIFIGTIVIVGALTFFPMLVL.

It belongs to the KdpA family. As to quaternary structure, the system is composed of three essential subunits: KdpA, KdpB and KdpC.

It is found in the cell membrane. Part of the high-affinity ATP-driven potassium transport (or Kdp) system, which catalyzes the hydrolysis of ATP coupled with the electrogenic transport of potassium into the cytoplasm. This subunit binds the extracellular potassium ions and delivers the ions to the membrane domain of KdpB through an intramembrane tunnel. This is Potassium-transporting ATPase potassium-binding subunit from Bacillus cereus (strain ZK / E33L).